Consider the following 260-residue polypeptide: Carbonic anhydrase 2 (260 aa).

Residue Ser-2 is modified to N-acetylserine. The residue at position 2 (Ser-2) is a Phosphoserine. Residues 3–259 (HHWGYGKHNG…LKNRQVRGFP (257 aa)) form the Alpha-carbonic anhydrase domain. His-64 functions as the Proton donor/acceptor in the catalytic mechanism. His-94, His-96, and His-119 together coordinate Zn(2+). A phosphoserine mark is found at Ser-165 and Ser-172. 198–199 (TT) is a binding site for substrate.

Belongs to the alpha-carbonic anhydrase family. As to quaternary structure, interacts with SLC4A4. Interaction with SLC4A7 regulates SLC4A7 transporter activity. The cofactor is Zn(2+).

It localises to the cytoplasm. It is found in the cell membrane. It carries out the reaction hydrogencarbonate + H(+) = CO2 + H2O. It catalyses the reaction urea = cyanamide + H2O. Its activity is regulated as follows. Inhibited by acetazolamide. Catalyzes the reversible hydration of carbon dioxide. Can also hydrate cyanamide to urea. Involved in the regulation of fluid secretion into the anterior chamber of the eye. Essential for bone resorption and osteoclast differentiation. Contributes to intracellular pH regulation in the duodenal upper villous epithelium during proton-coupled peptide absorption. Stimulates the chloride-bicarbonate exchange activity of SLC26A6. The chain is Carbonic anhydrase 2 (CA2) from Bos taurus (Bovine).